Reading from the N-terminus, the 184-residue chain is Ras-related protein Rap-1A (184 aa).

Residues 10–18, 29–35, Gly60, and 116–119 each bind GTP; these read GSGGVGKSA, VEKYDPT, and NKCD. The short motif at 32–40 is the Effector region element; that stretch reads YDPTIEDSY. Cys181 is subject to Cysteine methyl ester. Cys181 carries the S-geranylgeranyl cysteine lipid modification. The propeptide at 182 to 184 is removed in mature form; that stretch reads LLL.

It belongs to the small GTPase superfamily. Ras family. In terms of assembly, found in a complex, at least composed of ITGB1BP1, KRIT1 and RAP1A. Interacts (active GTP-bound form preferentially) with KRIT1 (via C-terminus FERM domain); the interaction does not induce the opening conformation of KRIT1. Found in a complex composed of CDH1, RAP1A and PKP3; PKP3 acts as a scaffold protein within the complex, the complex is required for CDH1 localization to mature desmosome cell junctions. In its GTP-bound form interacts with PLCE1 and RADIL. Interacts with SGSM1, SGSM2 and SGSM3. Interacts (via GTP-bound active form) with RAPGEF2 (via Ras-associating domain). Interacts with TBC1D21. Interacts with RAP1GDS1.

Its subcellular location is the cell membrane. It localises to the cytoplasm. The protein resides in the perinuclear region. The protein localises to the cell junction. It is found in the early endosome. The catalysed reaction is GTP + H2O = GDP + phosphate + H(+). Its activity is regulated as follows. Activated by guanine nucleotide-exchange factors (GEF) EPAC and EPAC2 in a cAMP-dependent manner, and GFR. Its function is as follows. Counteracts the mitogenic function of Ras, at least partly because it can interact with Ras GAPs and RAF in a competitive manner. Together with ITGB1BP1, regulates KRIT1 localization to microtubules and membranes. Plays a role in nerve growth factor (NGF)-induced neurite outgrowth. Plays a role in the regulation of embryonic blood vessel formation. Involved in the establishment of basal endothelial barrier function. Facilitates the progressive accumulation of CDH1 at mature desmosome junctions via cAMP-dependent signaling and its interaction with PKP3. May be involved in the regulation of the vascular endothelial growth factor receptor KDR expression at endothelial cell-cell junctions. The sequence is that of Ras-related protein Rap-1A (RAP1A) from Bos taurus (Bovine).